Consider the following 700-residue polypeptide: Polyribonucleotide nucleotidyltransferase (700 aa).

The Mg(2+) site is built by Asp-491 and Asp-497. In terms of domain architecture, KH spans 558–617 (PNYAVIEINPDKIRDVIGKGGATIRQLTEETGAVIDIDDAGTIRIFGENKAATKAAIAKI). The S1 motif domain maps to 627–695 (GKTYEGTVAR…NRGRIKLTMK (69 aa)).

The protein belongs to the polyribonucleotide nucleotidyltransferase family. In terms of assembly, component of the RNA degradosome, which is a multiprotein complex involved in RNA processing and mRNA degradation. Requires Mg(2+) as cofactor.

It localises to the cytoplasm. It carries out the reaction RNA(n+1) + phosphate = RNA(n) + a ribonucleoside 5'-diphosphate. Functionally, involved in mRNA degradation. Catalyzes the phosphorolysis of single-stranded polyribonucleotides processively in the 3'- to 5'-direction. In Psychrobacter cryohalolentis (strain ATCC BAA-1226 / DSM 17306 / VKM B-2378 / K5), this protein is Polyribonucleotide nucleotidyltransferase.